We begin with the raw amino-acid sequence, 306 residues long: MWFRNLLVYRLTQDLQLDADSLEKALGEKPARPCASQELTTYGFTAPFGKGPDAPLVHVSQDFFLISARKEERILPGSVVRDALKEKVDEIEAQQMRKVYKKERDQLKDEIVQTLLPRAFIRRSSTFAAIAPSLGLILVDSASAKKAEDLLSTLREALGSLPVRPLSVKVAPTATLTDWVKTQEAAGDFHVLDECELRDTHEDGGVVRCKRQDLTSEEIQLHLTAGKLVTQLSLAWSDKLSFVLDDKLAVKRLRFEDLLQEQAEKDGGEDALGQLDASFTLMMLTFAEFLPALFEALGGEEIPQGV.

This sequence belongs to the RdgC family.

It localises to the cytoplasm. The protein resides in the nucleoid. Functionally, may be involved in recombination. This Pseudomonas aeruginosa (strain LESB58) protein is Recombination-associated protein RdgC.